The sequence spans 930 residues: Short transient receptor potential channel 6 (930 aa).

The interval 1-27 (MSQSPRFVTRRGGSLKAAPGAGTRRNE) is disordered. The Cytoplasmic segment spans residues 1-437 (MSQSPRFVTR…CSKMGKILRG (437 aa)). 4 ANK repeats span residues 96–125 (IEEE…SLNV), 131–160 (MGQN…LSRV), 162–188 (DALL…FAEG), and 217–246 (HDVT…RIER). Residues 438 to 458 (PFMKFVAHAASFTIFLGLLVM) traverse the membrane as a helical segment. At 459 to 486 (NAADRFEGTKLLPNETSTDNARQLFRMK) the chain is on the extracellular side. The helical transmembrane segment at 487–507 (TSCFSWMEMLIISWVIGMIWA) threads the bilayer. Topologically, residues 508 to 520 (ECKEIWTQGPKEY) are cytoplasmic. A helical membrane pass occupies residues 521–541 (LFELWNMLDFGMLAIFAASFI). Over 542–591 (ARFMAFWHASKAQSIIDANDTLKDLTKVTLGDNVKYYNLARIKWDPTDPQ) the chain is Extracellular. Asn560 carries an N-linked (GlcNAc...) asparagine glycan. The chain crosses the membrane as a helical span at residues 592–612 (IISEGLYAIAVVLSFSRIAYI). The Cytoplasmic portion of the chain corresponds to 613-635 (LPANESFGPLQISLGRTVKDIFK). The chain crosses the membrane as a helical span at residues 636–656 (FMVIFIMVFVAFMIGMFNLYS). The Extracellular portion of the chain corresponds to 657–705 (YYIGAKQNEAFTTVEESFKTLFWAIFGLSEVKSVVINYNHKFIENIGYV). Residues 706-726 (LYGVYNVTMVIVLLNMLIAMI) form a helical membrane-spanning segment. Residues 727 to 930 (NSSFQEIEDD…LEPKLEESRR (204 aa)) lie on the Cytoplasmic side of the membrane. A Phosphoserine modification is found at Ser814.

The protein belongs to the transient receptor (TC 1.A.4) family. STrpC subfamily. TRPC6 sub-subfamily. In terms of assembly, homodimer; forms channel complex. Interacts with MX1 and RNF24. Phosphorylated by FYN, leading to an increase of TRPC6 channel activity. In terms of processing, N-glycosylated. In terms of tissue distribution, lung and brain.

It is found in the cell membrane. The enzyme catalyses Ca(2+)(in) = Ca(2+)(out). In terms of biological role, forms a receptor-activated non-selective calcium permeant cation channel. Probably is operated by a phosphatidylinositol second messenger system activated by receptor tyrosine kinases or G-protein coupled receptors. Activated by diacylglycerol (DAG) in a membrane-delimited fashion, independently of protein kinase C. Seems not to be activated by intracellular calcium store depletion. This Mus musculus (Mouse) protein is Short transient receptor potential channel 6.